Consider the following 55-residue polypeptide: Large ribosomal subunit protein bL33 (55 aa).

Belongs to the bacterial ribosomal protein bL33 family.

In Aromatoleum aromaticum (strain DSM 19018 / LMG 30748 / EbN1) (Azoarcus sp. (strain EbN1)), this protein is Large ribosomal subunit protein bL33.